Consider the following 194-residue polypeptide: NADH-quinone oxidoreductase subunit B 1 (194 aa).

The [4Fe-4S] cluster site is built by cysteine 73, cysteine 74, cysteine 138, and cysteine 168.

Belongs to the complex I 20 kDa subunit family. In terms of assembly, NDH-1 is composed of 14 different subunits. Subunits NuoB, C, D, E, F, and G constitute the peripheral sector of the complex. The cofactor is [4Fe-4S] cluster.

The protein localises to the cell inner membrane. The catalysed reaction is a quinone + NADH + 5 H(+)(in) = a quinol + NAD(+) + 4 H(+)(out). In terms of biological role, NDH-1 shuttles electrons from NADH, via FMN and iron-sulfur (Fe-S) centers, to quinones in the respiratory chain. The immediate electron acceptor for the enzyme in this species is believed to be ubiquinone. Couples the redox reaction to proton translocation (for every two electrons transferred, four hydrogen ions are translocated across the cytoplasmic membrane), and thus conserves the redox energy in a proton gradient. In Rhizobium etli (strain CIAT 652), this protein is NADH-quinone oxidoreductase subunit B 1.